Consider the following 68-residue polypeptide: Large ribosomal subunit protein uL30 (68 aa).

The protein belongs to the universal ribosomal protein uL30 family. In terms of assembly, part of the 50S ribosomal subunit.

The chain is Large ribosomal subunit protein uL30 from Paenarthrobacter aurescens (strain TC1).